The chain runs to 494 residues: 2,3-bisphosphoglycerate-independent phosphoglycerate mutase (494 aa).

Mn(2+)-binding residues include Asp12 and Ser62. Ser62 serves as the catalytic Phosphoserine intermediate. Substrate-binding positions include His121, 150–151, Arg181, Arg187, 252–255, and Lys317; these read RD and RSDR. Residues Asp384, His388, Asp425, His426, and His443 each coordinate Mn(2+).

This sequence belongs to the BPG-independent phosphoglycerate mutase family. As to quaternary structure, monomer. Requires Mn(2+) as cofactor.

The catalysed reaction is (2R)-2-phosphoglycerate = (2R)-3-phosphoglycerate. It participates in carbohydrate degradation; glycolysis; pyruvate from D-glyceraldehyde 3-phosphate: step 3/5. In terms of biological role, catalyzes the interconversion of 2-phosphoglycerate and 3-phosphoglycerate. In Anaplasma marginale (strain St. Maries), this protein is 2,3-bisphosphoglycerate-independent phosphoglycerate mutase.